The following is a 1074-amino-acid chain: Phospholipase D1 (1074 aa).

The region spanning valine 81–serine 212 is the PX domain. A PH domain is found at proline 219 to glutamine 328. S-palmitoyl cysteine attachment occurs at residues cysteine 240 and cysteine 241. The PLD phosphodiesterase 1 domain occupies tyrosine 459–arginine 486. The catalytic stretch occupies residues histidine 463–alanine 928. Residues serine 499, serine 561, and serine 629 each carry the phosphoserine modification. The region spanning glutamate 891 to serine 918 is the PLD phosphodiesterase 2 domain.

It belongs to the phospholipase D family. As to quaternary structure, interacts with PIP5K1B. Phosphorylated on serine and threonine residues. In terms of processing, it is uncertain whether palmitoylation is on Cys-240 and/or Cys-241. Palmitoylation is required prior to phosphorylation.

The protein localises to the cytoplasm. It localises to the perinuclear region. It is found in the endoplasmic reticulum membrane. Its subcellular location is the golgi apparatus membrane. The protein resides in the late endosome membrane. The enzyme catalyses a 1,2-diacyl-sn-glycero-3-phosphocholine + H2O = a 1,2-diacyl-sn-glycero-3-phosphate + choline + H(+). It catalyses the reaction ethanol + a 1,2-diacyl-sn-glycero-3-phosphocholine = 1,2-diacyl-sn-glycero-3-phosphoethanol + choline. It carries out the reaction 1,2-dihexadecanoyl-sn-glycero-3-phosphocholine + H2O = 1,2-dihexadecanoyl-sn-glycero-3-phosphate + choline + H(+). Its activity is regulated as follows. Stimulated by phosphatidylinositol 4,5-bisphosphate and phosphatidylinositol 3,4,5-trisphosphate, activated by the phosphokinase C-alpha, by the ADP-ribosylation factor-1 (ARF-1), and to a lesser extent by GTP-binding proteins: RHO A, RAC-1 and CDC42. Inhibited by oleate. Function as phospholipase selective for phosphatidylcholine. Implicated as a critical step in numerous cellular pathways, including signal transduction, membrane trafficking, and the regulation of mitosis. May be involved in the regulation of perinuclear intravesicular membrane traffic. This is Phospholipase D1 from Rattus norvegicus (Rat).